Here is a 125-residue protein sequence, read N- to C-terminus: uncharacterized protein (125 aa).

The protein resides in the plastid. This is an uncharacterized protein from Euglena longa (Euglenophycean alga).